The chain runs to 380 residues: Gap junction gamma-1 protein (380 aa).

The Cytoplasmic portion of the chain corresponds to 1-22 (MSWSFLTRLLDEISNHSTFVGK). The chain crosses the membrane as a helical span at residues 23-45 (IWLTLFIIFRIVLTVVGGESIYY). The Extracellular segment spans residues 46-75 (DEQSKFVCNTQQPGCENVCYDAFAPLSHVR). A helical membrane pass occupies residues 76-95 (FWVFQIILITTPTIMYLGFA). Over 96-171 (MHKIARSNDV…RRIKRDGLMK (76 aa)) the chain is Cytoplasmic. The helical transmembrane segment at 172–194 (VYILQLLSRIIFEVGFLFGQYIL) threads the bilayer. The Extracellular segment spans residues 195-228 (YGFEVAPSYVCTRSPCPHTVDCFVSRPTEKTIFL). A helical membrane pass occupies residues 229–251 (LIMYAVSCLCLSLTVLEILHLGL). The Cytoplasmic portion of the chain corresponds to 252 to 380 (SGIRDAFRRR…GSKCEKGIHA (129 aa)). The segment at 337 to 380 (AYQNGESSPSRSSSPESNGTAVEQNRLNFAQEKQGSKCEKGIHA) is disordered. A compositionally biased stretch (low complexity) spans 342-353 (ESSPSRSSSPES). Over residues 354–369 (NGTAVEQNRLNFAQEK) the composition is skewed to polar residues. The segment covering 370-380 (QGSKCEKGIHA) has biased composition (basic and acidic residues).

The protein belongs to the connexin family. Gamma-type subfamily. As to quaternary structure, a connexon is composed of a hexamer of connexins.

It is found in the cell membrane. The protein resides in the cell junction. The protein localises to the gap junction. Functionally, one gap junction consists of a cluster of closely packed pairs of transmembrane channels, the connexons, through which materials of low MW diffuse from one cell to a neighboring cell. Participates in a developmental pathway for formation of the notochord and tail. This is Gap junction gamma-1 protein (gjc1) from Danio rerio (Zebrafish).